The chain runs to 155 residues: Endoribonuclease YbeY (155 aa).

Residues H114, H118, and H124 each coordinate Zn(2+).

This sequence belongs to the endoribonuclease YbeY family. Requires Zn(2+) as cofactor.

The protein resides in the cytoplasm. In terms of biological role, single strand-specific metallo-endoribonuclease involved in late-stage 70S ribosome quality control and in maturation of the 3' terminus of the 16S rRNA. This Shigella flexneri serotype 5b (strain 8401) protein is Endoribonuclease YbeY.